Consider the following 347-residue polypeptide: Protein RecA (347 aa).

80 to 87 is a binding site for ATP; it reads GPESSGKT.

This sequence belongs to the RecA family.

The protein localises to the cytoplasm. Can catalyze the hydrolysis of ATP in the presence of single-stranded DNA, the ATP-dependent uptake of single-stranded DNA by duplex DNA, and the ATP-dependent hybridization of homologous single-stranded DNAs. It interacts with LexA causing its activation and leading to its autocatalytic cleavage. In Chlorobaculum parvum (strain DSM 263 / NCIMB 8327) (Chlorobium vibrioforme subsp. thiosulfatophilum), this protein is Protein RecA.